Here is a 556-residue protein sequence, read N- to C-terminus: Jerky protein homolog (556 aa).

An HTH psq-type domain is found at 11–62 (RGEKRKRVVLTLKEKIDICTRLEKGESRKALMQEYNVGMSTLYDIRAHKAQL). 2 DNA-binding regions (H-T-H motif) span residues 38 to 58 (RKAL…IRAH) and 110 to 142 (PMLI…FKAR). The 73-residue stretch at 77–149 (QRRTLHTPKL…KARHGIKKLD (73 aa)) folds into the HTH CENPB-type domain. Residues 213–382 (KDRLTVLMCA…VPSHVFRRAW (170 aa)) form the DDE-1 domain. Ser414 carries the phosphoserine modification. The disordered stretch occupies residues 439 to 482 (SWGVAGREAEGGRPPAATSPAEVVWSSEKTPKADQDGRGDPGEG). Residues 467–479 (KTPKADQDGRGDP) show a composition bias toward basic and acidic residues.

It belongs to the tigger transposable element derived protein family. As to expression, expressed ubiquitously.

It is found in the nucleus. Functionally, may bind DNA. This is Jerky protein homolog from Homo sapiens (Human).